The sequence spans 360 residues: Deoxyhypusine hydroxylase (360 aa).

3 HEAT-like PBS-type repeats span residues 56–82, 89–115, and 213–245; these read LKHE…ILQD, VRHE…YRSD, and ERYR…GLQD. Fe cation is bound by residues His-58, Glu-59, His-91, and Glu-92. Residues His-252, Glu-253, His-285, and Glu-286 each contribute to the Fe cation site.

The protein belongs to the deoxyhypusine hydroxylase family. The cofactor is Fe(2+).

The protein resides in the cytoplasm. The protein localises to the nucleus. It carries out the reaction [eIF5A protein]-deoxyhypusine + AH2 + O2 = [eIF5A protein]-hypusine + A + H2O. It participates in protein modification; eIF5A hypusination. Its function is as follows. Catalyzes the hydroxylation of the N(6)-(4-aminobutyl)-L-lysine intermediate to form hypusine, an essential post-translational modification only found in mature eIF-5A factor. The chain is Deoxyhypusine hydroxylase from Mycosarcoma maydis (Corn smut fungus).